We begin with the raw amino-acid sequence, 655 residues long: A-type voltage-gated potassium channel KCND3 (655 aa).

At 1–182 (MAAGVAAWLP…FENPHTSTLA (182 aa)) the chain is on the cytoplasmic side. The interval 6 to 21 (AAWLPFARAAAIGWMP) is interaction with KCNIP1 and KCNIP2. The interaction with KCNIP1 stretch occupies residues 70–78 (EKEFFFNED). Residues His104, Cys110, Cys131, and Cys132 each contribute to the Zn(2+) site. Ser153 carries the phosphoserine modification. A helical membrane pass occupies residues 183–204 (LVFYYVTGFFIAVSVITNVVET). At 205-223 (VPCGTVPGSKELPCGERYS) the chain is on the extracellular side. A helical transmembrane segment spans residues 224–246 (VAFFCLDTACVMIFTVEYLLRLF). Residues 247-253 (AAPSRYR) lie on the Cytoplasmic side of the membrane. A helical membrane pass occupies residues 254 to 277 (FIRSVMSIIDVVAIMPYYIGLVMT). The Extracellular segment spans residues 278–283 (NNEDVS). Residues 284-306 (GAFVTLRVFRVFRIFKFSRHSQG) traverse the membrane as a helical; Voltage-sensor segment. Residues 307–318 (LRILGYTLKSCA) lie on the Cytoplasmic side of the membrane. A helical transmembrane segment spans residues 319–343 (SELGFLLFSLTMAIIIFATVMFYAE). Topologically, residues 344-352 (KGSSASKFT) are extracellular. The helical intramembrane region spans 353–366 (SIPASFWYTIVTMT). Residues Thr367, Leu368, Gly369, and Tyr370 each contribute to the K(+) site. The short motif at 367-372 (TLGYGD) is the Selectivity filter element. The stretch at 367-374 (TLGYGDMV) is an intramembrane region. Residues 378–400 (IAGKIFGSICSLSGVLVIALPVP) traverse the membrane as a helical segment. The Cytoplasmic portion of the chain corresponds to 401-655 (VIVSNFSRIY…TSNVVKVSAL (255 aa)). Position 459 is a phosphothreonine (Thr459). Positions 470-487 (SLIESQHHHLLHCLEKTT) are interaction with KCNIP1 and KCNIP2. The segment at 472–487 (IESQHHHLLHCLEKTT) is mediates dendritic targeting. A disordered region spans residues 523-565 (SSMQNYPSTRSPSLSSHSGLTTTCCSRRSKKTTHLPNSNLPAT). Low complexity predominate over residues 529–548 (PSTRSPSLSSHSGLTTTCCS). Residues Ser569 and Ser585 each carry the phosphoserine modification. Positions 615–655 (ISIPTPPALTPEGESRPPPASPGPNTNIPSITSNVVKVSAL) are disordered. Over residues 637 to 655 (GPNTNIPSITSNVVKVSAL) the composition is skewed to polar residues.

The protein belongs to the potassium channel family. D (Shal) (TC 1.A.1.2) subfamily. Kv4.3/KCND3 sub-subfamily. In terms of assembly, homotetramer. Heterotetramer with KCND2. Associates with the regulatory subunit KCNIP3. Associates with the regulatory subunit KCNIP4. Interacts with KCNE1, KCNE2, SCN1B and KCNAB1 and DLG1. Component of heteromultimeric potassium channels. Identified in potassium channel complexes containing KCND1, KCND2, KCND3, KCNIP1, KCNIP2, KCNIP3, KCNIP4, DPP6 and DPP10. Interacts with KCNIP1; each KCNIP1 monomer interacts with two adjacent KCND3 subunits, through both the N-terminal inactivation ball of a KCND3 subunit and a C-terminal helix from the adjacent KCND3 subunit, clamping them together; this interaction stabilizes the tetrameric form and modulates the channel gating kinetics namely channel activation and inactivation kinetics and rate of recovery from inactivation. Interacts with DPP6; this interaction modulates the channel gating kinetics namely channel activation and inactivation kinetics and rate of recovery from inactivation. Interacts with KCNIP2; each KCNIP2 monomer interacts with two adjacent KCND3 subunits, through both the N-terminal inactivation ball of a KCND3 subunit and a C-terminal helix from the adjacent KCND3 subunit, clamping them together; this interaction modulates the channel gating kinetics. In terms of processing, regulated through phosphorylation at Ser-569 by CaMK2D.

It is found in the cell membrane. It localises to the sarcolemma. The protein localises to the cell projection. Its subcellular location is the dendrite. It catalyses the reaction K(+)(in) = K(+)(out). Functionally, pore-forming (alpha) subunit of voltage-gated A-type potassium channels that mediates transmembrane potassium transport in excitable membranes, in brain and heart. In cardiomyocytes, may generate the transient outward potassium current I(To). In neurons, may conduct the transient subthreshold somatodendritic A-type potassium current (ISA). Kinetics properties are characterized by fast activation at subthreshold membrane potentials, rapid inactivation, and quick recovery from inactivation. Channel properties are modulated by interactions with regulatory subunits. Interaction with the regulatory subunits KCNIP1 or KCNIP2 modulates the channel gating kinetics namely channel activation and inactivation kinetics and rate of recovery from inactivation. Likewise, interaction with DPP6 modulates the channel gating kinetics namely channel activation and inactivation kinetics. This is A-type voltage-gated potassium channel KCND3 from Mus musculus (Mouse).